The following is a 98-amino-acid chain: Putative pterin-4-alpha-carbinolamine dehydratase (98 aa).

It belongs to the pterin-4-alpha-carbinolamine dehydratase family.

The catalysed reaction is (4aS,6R)-4a-hydroxy-L-erythro-5,6,7,8-tetrahydrobiopterin = (6R)-L-erythro-6,7-dihydrobiopterin + H2O. This chain is Putative pterin-4-alpha-carbinolamine dehydratase, found in Mesorhizobium japonicum (strain LMG 29417 / CECT 9101 / MAFF 303099) (Mesorhizobium loti (strain MAFF 303099)).